The primary structure comprises 117 residues: Large ribosomal subunit protein bL19 (117 aa).

It belongs to the bacterial ribosomal protein bL19 family.

Its function is as follows. This protein is located at the 30S-50S ribosomal subunit interface and may play a role in the structure and function of the aminoacyl-tRNA binding site. The chain is Large ribosomal subunit protein bL19 from Proteus mirabilis (strain HI4320).